A 437-amino-acid chain; its full sequence is MASLRVSVLLVAASCLLLGSGLRAGPRTLVLLENINLRETHSLFFRSLSDRGFDLSFRTADDPSLSLIKYGEFLYDNLIIFSPSVEDFGGNINIETISSFIDGGGSVLVAASSDIGDPLRELGSECGIEFDEDKTAVIDHHNYDISDPGQHSLIVADSESLLKAPTIVGKAPLNPILFRGVGMVADPDNPLVLDILTGSSTSYSFFPDKPITQYPHAVGKNTLLIAGLQARNNARVVFSGSMDFFSDAFFNSAVQKAAGGSNRYAKTGNYELAVALSRWVFKEEGVLRVGQVSHHRVGESSPPSAYTVTDLVEYSIVIEQLSNGKWVPFDGDDIQLEFVRIDPFVRTFLKKNGGKYSVQFKLPDVYGVFQFKVDYNRLGYTHLYSTTQVSVRPLQHTQYERFIPSAYPYYASAFSVMFGLFIFSIVFLHMKEKEKSD.

The signal sequence occupies residues 1–24; the sequence is MASLRVSVLLVAASCLLLGSGLRA. Topologically, residues 25–407 are lumenal; the sequence is GPRTLVLLEN…QYERFIPSAY (383 aa). The chain crosses the membrane as a helical span at residues 408–428; it reads PYYASAFSVMFGLFIFSIVFL. Over 429–437 the chain is Cytoplasmic; sequence HMKEKEKSD.

The protein belongs to the DDOST 48 kDa subunit family. In terms of assembly, component of the oligosaccharyltransferase (OST) complex.

It is found in the endoplasmic reticulum membrane. It functions in the pathway protein modification; protein glycosylation. In terms of biological role, subunit of the oligosaccharyl transferase (OST) complex that catalyzes the initial transfer of a defined glycan (Glc(3)Man(9)GlcNAc(2) in eukaryotes) from the lipid carrier dolichol-pyrophosphate to an asparagine residue within an Asn-X-Ser/Thr consensus motif in nascent polypeptide chains, the first step in protein N-glycosylation. N-glycosylation occurs cotranslationally and the complex associates with the Sec61 complex at the channel-forming translocon complex that mediates protein translocation across the endoplasmic reticulum (ER). All subunits are required for a maximal enzyme activity. Required for the assembly of both SST3A- and SS3B-containing OST complexes. The chain is Dolichyl-diphosphooligosaccharide--protein glycosyltransferase 48 kDa subunit from Xenopus tropicalis (Western clawed frog).